A 203-amino-acid chain; its full sequence is dTTP/UTP pyrophosphatase (203 aa).

The active-site Proton acceptor is the aspartate 74.

Belongs to the Maf family. YhdE subfamily. A divalent metal cation serves as cofactor.

It localises to the cytoplasm. It carries out the reaction dTTP + H2O = dTMP + diphosphate + H(+). It catalyses the reaction UTP + H2O = UMP + diphosphate + H(+). In terms of biological role, nucleoside triphosphate pyrophosphatase that hydrolyzes dTTP and UTP. May have a dual role in cell division arrest and in preventing the incorporation of modified nucleotides into cellular nucleic acids. The chain is dTTP/UTP pyrophosphatase from Treponema denticola (strain ATCC 35405 / DSM 14222 / CIP 103919 / JCM 8153 / KCTC 15104).